Here is a 60-residue protein sequence, read N- to C-terminus: Cytotoxin 1 (60 aa).

Intrachain disulfides connect Cys-3-Cys-21, Cys-14-Cys-38, Cys-42-Cys-53, and Cys-54-Cys-59.

Belongs to the three-finger toxin family. Short-chain subfamily. Type IA cytotoxin sub-subfamily. As to quaternary structure, monomer in solution; Homodimer and oligomer in the presence of negatively charged lipids forming a pore with a size ranging between 20 and 30 Angstroms. Expressed by the venom gland.

It localises to the secreted. It is found in the target cell membrane. In terms of biological role, shows cytolytic activity on many different cells by forming pore in lipid membranes. In vivo, increases heart rate or kills the animal by cardiac arrest. In addition, it binds to heparin with high affinity, interacts with Kv channel-interacting protein 1 (KCNIP1) in a calcium-independent manner, and binds to integrin alpha-V/beta-3 (ITGAV/ITGB3) with moderate affinity. In Naja naja (Indian cobra), this protein is Cytotoxin 1.